The primary structure comprises 467 residues: ATP-dependent protease ATPase subunit HslU (467 aa).

Residues Val-22 and 64-69 each bind ATP; that span reads GVGKTE. Residues 149–192 are disordered; sequence QTNNPLESLFGGAIPNFGQNNEDEEEPPTEEIKTKRSEIKRQLE. The span at 178 to 192 shows a compositional bias: basic and acidic residues; that stretch reads EEIKTKRSEIKRQLE. ATP contacts are provided by Asp-280, Glu-345, and Arg-417.

This sequence belongs to the ClpX chaperone family. HslU subfamily. In terms of assembly, a double ring-shaped homohexamer of HslV is capped on each side by a ring-shaped HslU homohexamer. The assembly of the HslU/HslV complex is dependent on binding of ATP.

Its subcellular location is the cytoplasm. Functionally, ATPase subunit of a proteasome-like degradation complex; this subunit has chaperone activity. The binding of ATP and its subsequent hydrolysis by HslU are essential for unfolding of protein substrates subsequently hydrolyzed by HslV. HslU recognizes the N-terminal part of its protein substrates and unfolds these before they are guided to HslV for hydrolysis. The protein is ATP-dependent protease ATPase subunit HslU of Staphylococcus aureus (strain MRSA252).